The sequence spans 132 residues: Small ribosomal subunit protein uS8c (132 aa).

Belongs to the universal ribosomal protein uS8 family. Part of the 30S ribosomal subunit.

The protein localises to the plastid. It localises to the chloroplast. One of the primary rRNA binding proteins, it binds directly to 16S rRNA central domain where it helps coordinate assembly of the platform of the 30S subunit. The protein is Small ribosomal subunit protein uS8c (rps8) of Marchantia polymorpha (Common liverwort).